We begin with the raw amino-acid sequence, 64 residues long: Large ribosomal subunit protein bL35 (64 aa).

The tract at residues M1–V55 is disordered. The segment covering K23–Q39 has biased composition (basic residues).

This sequence belongs to the bacterial ribosomal protein bL35 family.

The chain is Large ribosomal subunit protein bL35 from Chlamydia muridarum (strain MoPn / Nigg).